Consider the following 593-residue polypeptide: MAPAAGACAGAPDSHPATVVFVCLFLIIFCPDPASAIQVTVSDPYHVVILFQPVTLPCTYQMSNTLTVPIVIWKYKSFCRDRIADAFSPASVDNQLNAQLAAGNPGYNPYVECQDSVRTVRVVATKQGNAVTLGDYYQGRRITITGNADLTFEQTAWGDSGVYYCSVVSAQDLDGNNEAYAELIVLGRTSEAPELLPGFRAGPLEDWLFVVVVCLASLLLFLLLGICWCQCCPHTCCCYVRCPCCPDKCCCPEALYAAGKAATSGVPSIYAPSIYTHLSPAKTPPPPPAMIPMGPPYGYPGDFDRHSSVGGHSSQVPLLRDVDGSVSSEVRSGYRIQANQQDDSMRVLYYMEKELANFDPSRPGPPNGRVERAMSEVTSLHEDDWRSRPSRAPALTPIRDEEWNRHSPQSPRTWEQEPLQEQPRGGWGSGRPRARSVDALDDINRPGSTESGRSSPPSSGRRGRAYAPPRSRSRDDLYDPDDPRDLPHSRDPHYYDDIRSRDPRADPRSRQRSRDPRDAGFRSRDPQYDGRLLEEALKKKGSGERRRVYREEEEEEEGQYPPAPPPYSETDSQASRERRLKKNLALSRESLVV.

The first 35 residues, M1–S35, serve as a signal peptide directing secretion. The Extracellular portion of the chain corresponds to A36 to D206. The Ig-like V-type domain maps to P89–A181. An intrachain disulfide couples C113 to C165. Residues W207–C227 form a helical membrane-spanning segment. Residues W228–V593 lie on the Cytoplasmic side of the membrane. T283 is modified (phosphothreonine). 5 positions are modified to phosphoserine: S308, S314, S332, S375, and S379. A compositionally biased stretch (basic and acidic residues) spans S375–S387. The interval S375 to R578 is disordered. Position 396 is a phosphothreonine (T396). 3 positions are modified to phosphoserine: S407, S410, and S436. A compositionally biased stretch (basic and acidic residues) spans R435–N444. Low complexity predominate over residues R445–G460. S471 and S473 each carry phosphoserine. The span at R472–R550 shows a compositional bias: basic and acidic residues. Residue Y478 is modified to Phosphotyrosine. S575 is modified (phosphoserine). K582 participates in a covalent cross-link: Glycyl lysine isopeptide (Lys-Gly) (interchain with G-Cter in ubiquitin). A phosphoserine mark is found at S587 and S590.

It belongs to the immunoglobulin superfamily. LISCH7 family. In terms of assembly, homotrimer or homotetramer constituted of isoform 1 and/or isoform 2 and isoform 3. Assembles into cell-cell contacts. Interacts (via the cytoplasmic domain) with MARVELD2 (via C-terminal cytoplasmic domain); the interaction is required to recruit MARVELD2 to tricellular contacts. Interacts with OCLN. Phosphorylation at Ser-308 by MAPK8/JNK1 and MAPK9/JNK2 may be required for exclusive localization at tricellular tight junstions. Post-translationally, polyubiquitinated at Lys-582 via 'Lys-63'-linked ubiquitin chains; deubiquitinated by USP53. Specifically expressed in liver. Also detected in kidney and lung.

The protein resides in the cell membrane. It is found in the cell junction. Its subcellular location is the tight junction. Its function is as follows. Probable role in the clearance of triglyceride-rich lipoprotein from blood. Binds chylomicrons, LDL and VLDL in presence of free fatty acids and allows their subsequent uptake in the cells. Maintains epithelial barrier function by recruiting MARVELD2/tricellulin to tricellular tight junctions. The protein is Lipolysis-stimulated lipoprotein receptor of Rattus norvegicus (Rat).